The primary structure comprises 329 residues: Thioredoxin-like fold domain-containing protein MRL7L homolog, chloroplastic (329 aa).

The transit peptide at 1 to 46 (MALQSCCSSSASVPATCSALCLAEATRAASLFVRPRAAARRLVLAR) directs the protein to the chloroplast. A disordered region spans residues 58 to 91 (AVQLVLGGRARDDGSESESSDDEDDDEPMQMTDE). Positions 72 to 85 (SESESSDDEDDDEP) are enriched in acidic residues.

The protein localises to the plastid. It localises to the chloroplast stroma. Its function is as follows. Plays an essential role in early steps of chloroplast development. Involved in the regulation of plastid gene expression. Required for the proper function of the plastid transcriptional machinery and protein accumulation in thylakoid membranes. May function as molecular chaperone to ensure proper organization of the nucleoids in chloroplasts. The sequence is that of Thioredoxin-like fold domain-containing protein MRL7L homolog, chloroplastic from Oryza sativa subsp. japonica (Rice).